We begin with the raw amino-acid sequence, 216 residues long: UPF0502 protein Pfl01_3711 (216 aa).

This sequence belongs to the UPF0502 family.

The sequence is that of UPF0502 protein Pfl01_3711 from Pseudomonas fluorescens (strain Pf0-1).